Consider the following 138-residue polypeptide: Putative pre-16S rRNA nuclease (138 aa).

It belongs to the YqgF nuclease family.

It is found in the cytoplasm. Functionally, could be a nuclease involved in processing of the 5'-end of pre-16S rRNA. In Listeria monocytogenes serovar 1/2a (strain ATCC BAA-679 / EGD-e), this protein is Putative pre-16S rRNA nuclease.